The primary structure comprises 362 residues: 3-dehydroquinate synthase (362 aa).

NAD(+) is bound by residues 71 to 76, 105 to 109, 129 to 130, Lys-142, Lys-151, and 169 to 172; these read DGEQYK, GVIGD, TT, and CLKT. Zn(2+)-binding residues include Glu-184, His-247, and His-264.

The protein belongs to the sugar phosphate cyclases superfamily. Dehydroquinate synthase family. The cofactor is Co(2+). Zn(2+) serves as cofactor. It depends on NAD(+) as a cofactor.

It localises to the cytoplasm. It carries out the reaction 7-phospho-2-dehydro-3-deoxy-D-arabino-heptonate = 3-dehydroquinate + phosphate. The protein operates within metabolic intermediate biosynthesis; chorismate biosynthesis; chorismate from D-erythrose 4-phosphate and phosphoenolpyruvate: step 2/7. Functionally, catalyzes the conversion of 3-deoxy-D-arabino-heptulosonate 7-phosphate (DAHP) to dehydroquinate (DHQ). This Salmonella enteritidis PT4 (strain P125109) protein is 3-dehydroquinate synthase.